The primary structure comprises 188 residues: A-type ATP synthase subunit E (188 aa).

Belongs to the V-ATPase E subunit family. As to quaternary structure, has multiple subunits with at least A(3), B(3), C, D, E, F, H, I and proteolipid K(x).

The protein resides in the cell membrane. Functionally, component of the A-type ATP synthase that produces ATP from ADP in the presence of a proton gradient across the membrane. The chain is A-type ATP synthase subunit E from Archaeoglobus fulgidus (strain ATCC 49558 / DSM 4304 / JCM 9628 / NBRC 100126 / VC-16).